The following is a 362-amino-acid chain: RNA-binding protein 48 (362 aa).

The RRM domain occupies 46 to 124; sequence WYLLIQGVPA…GLLHVCYAPE (79 aa). The disordered stretch occupies residues 334 to 362; sequence EVISSVPKPPEDKVEDVHRSRPLKQRRRI. Residues 342 to 352 are compositionally biased toward basic and acidic residues; it reads PPEDKVEDVHR. The span at 353 to 362 shows a compositional bias: basic residues; the sequence is SRPLKQRRRI.

This sequence belongs to the RBM48 family. In terms of assembly, component of the minor spliceosome. Within this complex, interacts with ARMC7 and PRPF8/PRP8.

As a component of the minor spliceosome, involved in the splicing of U12-type introns in pre-mRNAs. The chain is RNA-binding protein 48 (RBM48) from Bos taurus (Bovine).